Here is a 446-residue protein sequence, read N- to C-terminus: Probable ribosomal RNA small subunit methyltransferase B (446 aa).

Residues 260–266 (CAAPGGK), Asp284, Asp311, and Asp330 each bind S-adenosyl-L-methionine. The Nucleophile role is filled by Cys383.

It belongs to the class I-like SAM-binding methyltransferase superfamily. RsmB/NOP family.

Its subcellular location is the cytoplasm. The enzyme catalyses cytidine(967) in 16S rRNA + S-adenosyl-L-methionine = 5-methylcytidine(967) in 16S rRNA + S-adenosyl-L-homocysteine + H(+). Its function is as follows. Specifically methylates the cytosine at position 967 (m5C967) of 16S rRNA. This chain is Probable ribosomal RNA small subunit methyltransferase B, found in Synechocystis sp. (strain ATCC 27184 / PCC 6803 / Kazusa).